Consider the following 498-residue polypeptide: Neuronal acetylcholine receptor subunit beta-4 (498 aa).

An N-terminal signal peptide occupies residues 1-21 (MRRAPSLVLFFLVALCGRGNC). Topologically, residues 22–239 (RVANAEEKLM…RKPLFYTINL (218 aa)) are extracellular. N-linked (GlcNAc...) asparagine glycans are attached at residues Asn36, Asn93, Asn138, and Asn166. An intrachain disulfide couples Cys153 to Cys167. A helical membrane pass occupies residues 240–255 (IIPCVLTTLLAILVFY). Residues 256-261 (LPSDCG) are Cytoplasmic-facing. Glu262 lines the Na(+) pocket. A helical transmembrane segment spans residues 262-277 (EKMTLCISVLLALTFF). At 278–296 (LLLISKIVPPTSLDVPLIG) the chain is on the extracellular side. The chain crosses the membrane as a helical span at residues 297 to 321 (KYLMFTMVLVTFSIVTSVCVLNVHH). Residues 322–454 (RSPSTHTMAP…QSVVEDWKYV (133 aa)) lie on the Cytoplasmic side of the membrane. Residues 357 to 377 (ARAFPPSKSCVTKPEATATST) form a disordered region. Residues 455-478 (AMVVDRLFLWVFMFVCVLGTVGLF) traverse the membrane as a helical segment. Residues 479 to 498 (LPPLFQTHAASEGPYAAQRD) are Extracellular-facing.

This sequence belongs to the ligand-gated ion channel (TC 1.A.9) family. Acetylcholine receptor (TC 1.A.9.1) subfamily. Beta-4/CHRNB4 sub-subfamily. In terms of assembly, neuronal AChR is composed of two different types of subunits: alpha and beta. CHRNB4/Beta-4 subunit can be combined to CHRNA2/alpha-2, CHRNA3/alpha-3 or CHRNA4/alpha-4, CHRNA5/alpha-5 and CHRNB3/beta-3 to give rise to functional receptors. Forms stoichiometries such as (CHRNA3)2:(CHRNB4)3 or (CHRNA3:CHRNB4)2:CHRNB3. Interacts with RIC3; which is required for proper folding and assembly. Interacts with LYPD6.

Its subcellular location is the synaptic cell membrane. The protein resides in the cell membrane. The catalysed reaction is Ca(2+)(in) = Ca(2+)(out). It carries out the reaction K(+)(in) = K(+)(out). It catalyses the reaction Na(+)(in) = Na(+)(out). Activated by a myriad of ligands such as acetylcholine, cytisine, nicotine, choline and epibatidine. The heteropentamer CHRNA3:CHRNB4 activity is blocked by the alpha-conotoxin ImI and AuIB. Its function is as follows. Component of neuronal acetylcholine receptors (nAChRs) that function as pentameric, ligand-gated cation channels with high calcium permeability among other activities. nAChRs are excitatory neurotrasnmitter receptors formed by a collection of nAChR subunits known to mediate synaptic transmission in the nervous system and the neuromuscular junction. Each nAchR subunit confers differential attributes to channel properties, including activation, deactivation and desensitization kinetics, pH sensitivity, cation permeability, and binding to allosteric modulators. CHRNB4 forms heteropentameric neuronal acetylcholine receptors with CHRNA2, CHRNA3 and CHRNA4, as well as CHRNA5 and CHRNB3 as accesory subunits. CHRNA3:CHRNB4 being predominant in neurons of the autonomic ganglia, it is known as ganglionic nicotinic receptor. CHRNA3:CHRNB4 or CHRNA3:CHRNA5:CHRNB4 play also an important role in the habenulo-interpeduncular tract, modulating the mesolimbic dopamine system and affecting reward circuits and addiction. Hypothalamic CHRNA3:CHRNB4 nAChR activation by nicotine leads to activation of POMC neurons and a decrease in food intake. In Homo sapiens (Human), this protein is Neuronal acetylcholine receptor subunit beta-4.